A 196-amino-acid polypeptide reads, in one-letter code: Probable GTP-binding protein EngB (196 aa).

Residues 24–196 (ELSEVALSGR…IWNLIEPYIS (173 aa)) form the EngB-type G domain. Residues 32–39 (GRSNVGKS), 59–63 (GKTQT), 77–80 (DVPG), 144–147 (TKED), and 176–178 (YSS) contribute to the GTP site. Mg(2+) contacts are provided by Ser39 and Thr61.

Belongs to the TRAFAC class TrmE-Era-EngA-EngB-Septin-like GTPase superfamily. EngB GTPase family. Mg(2+) is required as a cofactor.

Necessary for normal cell division and for the maintenance of normal septation. This is Probable GTP-binding protein EngB from Staphylococcus aureus (strain MW2).